A 410-amino-acid chain; its full sequence is Arginine deiminase (410 aa).

C400 acts as the Amidino-cysteine intermediate in catalysis.

Belongs to the arginine deiminase family.

Its subcellular location is the cytoplasm. The catalysed reaction is L-arginine + H2O = L-citrulline + NH4(+). It functions in the pathway amino-acid degradation; L-arginine degradation via ADI pathway; carbamoyl phosphate from L-arginine: step 1/2. The chain is Arginine deiminase from Streptococcus agalactiae serotype Ia (strain ATCC 27591 / A909 / CDC SS700).